A 199-amino-acid chain; its full sequence is ATP-dependent Clp protease proteolytic subunit (199 aa).

The active-site Nucleophile is Ser-97. The active site involves His-122.

The protein belongs to the peptidase S14 family. As to quaternary structure, fourteen ClpP subunits assemble into 2 heptameric rings which stack back to back to give a disk-like structure with a central cavity, resembling the structure of eukaryotic proteasomes.

The protein localises to the cytoplasm. It catalyses the reaction Hydrolysis of proteins to small peptides in the presence of ATP and magnesium. alpha-casein is the usual test substrate. In the absence of ATP, only oligopeptides shorter than five residues are hydrolyzed (such as succinyl-Leu-Tyr-|-NHMec, and Leu-Tyr-Leu-|-Tyr-Trp, in which cleavage of the -Tyr-|-Leu- and -Tyr-|-Trp bonds also occurs).. Cleaves peptides in various proteins in a process that requires ATP hydrolysis. Has a chymotrypsin-like activity. Plays a major role in the degradation of misfolded proteins. In Pelobacter propionicus (strain DSM 2379 / NBRC 103807 / OttBd1), this protein is ATP-dependent Clp protease proteolytic subunit.